Consider the following 380-residue polypeptide: Putative RNA ligase (380 aa).

In terms of biological role, putative RNA ligase. Is able to catalyze the adenylation reaction of ssDNA 3'-terminal phosphate (ssDNA 3'p) to 3'-adenylated DNA (ssDNA 3'pp5'A). This chain is Putative RNA ligase, found in Thermovibrio ammonificans (strain DSM 15698 / JCM 12110 / HB-1).